The sequence spans 262 residues: MLSARVIPCLDVHGGRVVKGTNFVNLRDAGDPVEVARRYEAEGADELVFLDITASHEERAILLDVVRRTAEQVFMPLTVGGGVRTVEDVRALLSAGCDKVSINSSAVTNPDFIRQAADRFGRQCIVVNIDPKRVQKDGEEFWEVHINGGRKPTGLQAVQWAKRVEELGAGEIVLTSMDADGTCDGYDIPITRAVSEAVRIPVVASGGAGNPDHLVEAIRDGKADAVLAASIFHFGTHPIGPTKQHMAEAGIRVRMPAEPFAT.

Catalysis depends on residues D11 and D130.

Belongs to the HisA/HisF family. In terms of assembly, heterodimer of HisH and HisF.

It localises to the cytoplasm. It carries out the reaction 5-[(5-phospho-1-deoxy-D-ribulos-1-ylimino)methylamino]-1-(5-phospho-beta-D-ribosyl)imidazole-4-carboxamide + L-glutamine = D-erythro-1-(imidazol-4-yl)glycerol 3-phosphate + 5-amino-1-(5-phospho-beta-D-ribosyl)imidazole-4-carboxamide + L-glutamate + H(+). It participates in amino-acid biosynthesis; L-histidine biosynthesis; L-histidine from 5-phospho-alpha-D-ribose 1-diphosphate: step 5/9. Its function is as follows. IGPS catalyzes the conversion of PRFAR and glutamine to IGP, AICAR and glutamate. The HisF subunit catalyzes the cyclization activity that produces IGP and AICAR from PRFAR using the ammonia provided by the HisH subunit. In Rhodopirellula baltica (strain DSM 10527 / NCIMB 13988 / SH1), this protein is Imidazole glycerol phosphate synthase subunit HisF.